The sequence spans 121 residues: HTH-type transcriptional regulator Rv1152 (121 aa).

In terms of domain architecture, HTH gntR-type spans 15–83 (KPLFDQLRTQ…GRFGTFISRF (69 aa)). Positions 43-62 (VRDLAGQLGVAANTVARAYR) form a DNA-binding region, H-T-H motif.

It localises to the cytoplasm. Its subcellular location is the secreted. The protein localises to the cell wall. Transcriptional regulator that modulates resistance to vancomycin and aminoglycosides. Negatively regulates the expression of several genes responsive to vancomycin, resulting in decreased susceptibility of bacteria to vancomycin. Negatively regulates the expression of genes encoding the ribosome binding protein Hsp, the small subunit of sulfate adenylyltransferase CysD, the L-lysine-epsilon aminotransferase LAT and the protease HtpX. Also modulates purine metabolism and aminoglycoside antibiotic resistance. Negatively regulates the expression of purine metabolism-related genes and the accumulation of purine metabolites, which affects aminoglycoside antibiotic resistance. This chain is HTH-type transcriptional regulator Rv1152, found in Mycobacterium tuberculosis (strain ATCC 25618 / H37Rv).